A 167-amino-acid chain; its full sequence is MERIIEKAIYASRWLMFPVYVGLSFGFILLTLKFFQQIVFIIPDILAMSESGLVLVVLSLIDIALVGGLLVMVMFLGYENFISKMDIQDNEKRLGWMGTMDVNSIKNKVASSIVAISSVHLLRLFMEAEKILDDKIMLCVIIHLTFVLSAFGMAYIDKMSKKKHVLH.

The next 3 membrane-spanning stretches (helical) occupy residues 15–35, 53–73, and 136–156; these read LMFP…LKFF, LVLV…LVMV, and IMLC…MAYI.

The protein belongs to the UPF0114 family.

The protein localises to the cell membrane. The chain is UPF0114 protein in repA1-repA2 intergenic region from Buchnera aphidicola subsp. Diuraphis noxia.